The sequence spans 323 residues: tRNA U34 carboxymethyltransferase (323 aa).

Carboxy-S-adenosyl-L-methionine-binding positions include Lys-91, Trp-105, Lys-110, Gly-130, 181–182, Met-196, Tyr-200, and Arg-315; that span reads IE.

It belongs to the class I-like SAM-binding methyltransferase superfamily. CmoB family. As to quaternary structure, homotetramer.

The enzyme catalyses carboxy-S-adenosyl-L-methionine + 5-hydroxyuridine(34) in tRNA = 5-carboxymethoxyuridine(34) in tRNA + S-adenosyl-L-homocysteine + H(+). In terms of biological role, catalyzes carboxymethyl transfer from carboxy-S-adenosyl-L-methionine (Cx-SAM) to 5-hydroxyuridine (ho5U) to form 5-carboxymethoxyuridine (cmo5U) at position 34 in tRNAs. The polypeptide is tRNA U34 carboxymethyltransferase (Yersinia pestis bv. Antiqua (strain Antiqua)).